The sequence spans 700 residues: Sex comb on midleg-like protein 2 (700 aa).

The tract at residues 1-33 is disordered; sequence MGQTVNEDSMDVKKENQEKTPQSSTSSVQRDDF. Polar residues predominate over residues 19-28; that stretch reads KTPQSSTSSV. 2 MBT repeats span residues 33-131 and 139-240; these read FHWE…LQPP and SSWP…LQPP. The span at 253 to 281 shows a compositional bias: polar residues; it reads TESSPSEASQHSMQSPQKTTLILPTQQVR. 2 disordered regions span residues 253-320 and 466-550; these read TESS…EKPL and PFSS…SSLN. Ser-256, Ser-261, Ser-267, Ser-299, and Ser-300 each carry phosphoserine. Thr-305 carries the post-translational modification Phosphothreonine. A compositionally biased stretch (basic and acidic residues) spans 476–495; it reads SSAEHDKNQSAKEDVTERQS. A Phosphoserine modification is found at Ser-499. Thr-503 carries the phosphothreonine modification. At Ser-511 the chain carries Phosphoserine. Residue Lys-518 forms a Glycyl lysine isopeptide (Lys-Gly) (interchain with G-Cter in SUMO2) linkage. Ser-522 carries the phosphoserine modification. Residues 535-545 are compositionally biased toward basic and acidic residues; that stretch reads PKEENLSEDSK. Lys-536 is covalently cross-linked (Glycyl lysine isopeptide (Lys-Gly) (interchain with G-Cter in SUMO2)). Phosphoserine occurs at positions 570, 583, 590, and 594. The segment covering 575-584 has biased composition (polar residues); the sequence is RSVPGTTSSP. Positions 575-594 are disordered; the sequence is RSVPGTTSSPLVGDISPKSS. Residues Lys-599 and Lys-605 each participate in a glycyl lysine isopeptide (Lys-Gly) (interchain with G-Cter in SUMO2) cross-link. Residues 631-700 form the SAM domain; the sequence is WSVDEVIQFM…IEKLKEGKYS (70 aa).

This sequence belongs to the SCM family. In terms of tissue distribution, highly expressed in placenta, thymus and testis. Detected at lower levels in brain, liver, skeletal muscle, pancreas and ovary.

Its subcellular location is the nucleus. Its function is as follows. Putative Polycomb group (PcG) protein. PcG proteins act by forming multiprotein complexes, which are required to maintain the transcriptionally repressive state of homeotic genes throughout development. This is Sex comb on midleg-like protein 2 (SCML2) from Homo sapiens (Human).